A 58-amino-acid chain; its full sequence is Small ribosomal subunit protein bS21 (58 aa).

The segment at 27–58 (GVLSEARKHEHYEKPSVKRKKKSEAARKRKFK) is disordered. Over residues 31 to 42 (EARKHEHYEKPS) the composition is skewed to basic and acidic residues. Residues 43–58 (VKRKKKSEAARKRKFK) show a composition bias toward basic residues.

The protein belongs to the bacterial ribosomal protein bS21 family.

This Desulfitobacterium hafniense (strain DSM 10664 / DCB-2) protein is Small ribosomal subunit protein bS21.